The sequence spans 504 residues: ATP synthase subunit alpha (504 aa).

Residue 169–176 (GDRQTGKT) participates in ATP binding.

This sequence belongs to the ATPase alpha/beta chains family. As to quaternary structure, F-type ATPases have 2 components, CF(1) - the catalytic core - and CF(0) - the membrane proton channel. CF(1) has five subunits: alpha(3), beta(3), gamma(1), delta(1), epsilon(1). CF(0) has three main subunits: a(1), b(2) and c(9-12). The alpha and beta chains form an alternating ring which encloses part of the gamma chain. CF(1) is attached to CF(0) by a central stalk formed by the gamma and epsilon chains, while a peripheral stalk is formed by the delta and b chains.

The protein localises to the cell membrane. The enzyme catalyses ATP + H2O + 4 H(+)(in) = ADP + phosphate + 5 H(+)(out). In terms of biological role, produces ATP from ADP in the presence of a proton gradient across the membrane. The alpha chain is a regulatory subunit. This is ATP synthase subunit alpha from Clostridium kluyveri (strain NBRC 12016).